Here is a 691-residue protein sequence, read N- to C-terminus: MARTQAEPPASQPDARAAWLRDQLERANYAYYVLDQPDLPDAEYDRLFGELQQLETDHPDLVTPDSPTQRVGGEVAGGFTPVVHDAPMLSLNNGFADEDIAAFDKRVADALGKTTDLAGSVTDPVEYACELKFDGLAISLRYEHGVFVQASTRGDGTTGEDVTENVRTIRSIPLKLKGAHVPALLDVRGEVLMFKRDFARLNERQRAAEQREFANPRNAAAGSLRQLDPKITAQRPLSFFAYGIGVLDGMPMPDTHSALLDWYESFGLPVNRERAVVYGADGLLGFFRKVGEKRESLPYDIDGVVYKVNRRDEQDRLGFVSRAPRFALAHKFPAQEALTRLVAIDVQVGRTGAITPVARLEPVFVGGATVTNATLHNEDEVRRKDIRIGDTVIVRRAGDVIPEVVGALLDRRPDDAAEFVMPTECPVCGSKIERLPDEAIARCTGGLFCPAQRKQALWHFAQRRALDIDGLGEKIIDQLVELNLVRTPADLFNLGFATLAELDRFAEKSAQNLLDSLEKAKHTTLARFIYGLGIRHVGESTAKDLAKHFGSLTPIMDASIEELLEVNDVGPIVAESIHQFFAEEHNRTVIEQLRAPGKVTWAEGPPAPRAPQGVLAGKTVVLTGTLPNLTRDAAKEMLEAAGAKVAGSVSKKTDYVVAGADAGSKLAKAEELGIPVLDEDGLHQLLEGNTP.

Residues 41-45 (DAEYD), 90-91 (SL), and glutamate 130 each bind NAD(+). Lysine 132 (N6-AMP-lysine intermediate) is an active-site residue. The NAD(+) site is built by arginine 153, glutamate 190, lysine 307, and lysine 331. 4 residues coordinate Zn(2+): cysteine 425, cysteine 428, cysteine 443, and cysteine 449. Residues 610–691 (APQGVLAGKT…LHQLLEGNTP (82 aa)) form the BRCT domain.

Belongs to the NAD-dependent DNA ligase family. LigA subfamily. The cofactor is Mg(2+). Mn(2+) serves as cofactor.

It carries out the reaction NAD(+) + (deoxyribonucleotide)n-3'-hydroxyl + 5'-phospho-(deoxyribonucleotide)m = (deoxyribonucleotide)n+m + AMP + beta-nicotinamide D-nucleotide.. DNA ligase that catalyzes the formation of phosphodiester linkages between 5'-phosphoryl and 3'-hydroxyl groups in double-stranded DNA using NAD as a coenzyme and as the energy source for the reaction. It is essential for DNA replication and repair of damaged DNA. The chain is DNA ligase from Burkholderia ambifaria (strain ATCC BAA-244 / DSM 16087 / CCUG 44356 / LMG 19182 / AMMD) (Burkholderia cepacia (strain AMMD)).